The sequence spans 300 residues: ATP-dependent (S)-NAD(P)H-hydrate dehydratase (300 aa).

Residues 14 to 293 (LLTLFKTIVP…NEISAVFRSD (280 aa)) form the YjeF C-terminal domain. Residues glycine 114 and 167-173 (NAMEFRR) each bind (6S)-NADPHX. Residues 198-202 (KGVND) and 219-228 (GSGRRCGGQG) each bind ATP. Position 229 (aspartate 229) interacts with (6S)-NADPHX.

The protein belongs to the NnrD/CARKD family. Mg(2+) serves as cofactor.

It carries out the reaction (6S)-NADHX + ATP = ADP + phosphate + NADH + H(+). It catalyses the reaction (6S)-NADPHX + ATP = ADP + phosphate + NADPH + H(+). Its function is as follows. Catalyzes the dehydration of the S-form of NAD(P)HX at the expense of ATP, which is converted to ADP. Together with NAD(P)HX epimerase, which catalyzes the epimerization of the S- and R-forms, the enzyme allows the repair of both epimers of NAD(P)HX, a damaged form of NAD(P)H that is a result of enzymatic or heat-dependent hydration. The sequence is that of ATP-dependent (S)-NAD(P)H-hydrate dehydratase from Drosophila pseudoobscura pseudoobscura (Fruit fly).